Here is a 269-residue protein sequence, read N- to C-terminus: MSRLEQRFAELKAEGRSALVTFVTAGDPGYDASLQILKGLPAAGADVIELGMPFTDPMADGVAIQLATLRALEAGQTLAKTLQMVREFRVDNHTTPIVLMGYYNPIHRFGVEKFVAEAKQAGVDGLIIVDLPPEHDAELATPAQAAGIDFIRLTTPTTDDARLPRVLERSSGFVYYVSVAGVTGAGSATTEHVTEAIARLRRHTDLPISVGFGIRTPEQAANIARLADGVVVGSALVDKIAQATSADQAVNDVLSLCSALAEGVRGARR.

Active-site proton acceptor residues include glutamate 49 and aspartate 60.

It belongs to the TrpA family. As to quaternary structure, tetramer of two alpha and two beta chains.

It carries out the reaction (1S,2R)-1-C-(indol-3-yl)glycerol 3-phosphate + L-serine = D-glyceraldehyde 3-phosphate + L-tryptophan + H2O. Its pathway is amino-acid biosynthesis; L-tryptophan biosynthesis; L-tryptophan from chorismate: step 5/5. In terms of biological role, the alpha subunit is responsible for the aldol cleavage of indoleglycerol phosphate to indole and glyceraldehyde 3-phosphate. The protein is Tryptophan synthase alpha chain of Pseudomonas putida (Arthrobacter siderocapsulatus).